Reading from the N-terminus, the 215-residue chain is NADH-quinone oxidoreductase subunit C (215 aa).

The protein belongs to the complex I 30 kDa subunit family. As to quaternary structure, NDH-1 is composed of 14 different subunits. Subunits NuoB, C, D, E, F, and G constitute the peripheral sector of the complex.

It is found in the cell inner membrane. The enzyme catalyses a quinone + NADH + 5 H(+)(in) = a quinol + NAD(+) + 4 H(+)(out). NDH-1 shuttles electrons from NADH, via FMN and iron-sulfur (Fe-S) centers, to quinones in the respiratory chain. The immediate electron acceptor for the enzyme in this species is believed to be ubiquinone. Couples the redox reaction to proton translocation (for every two electrons transferred, four hydrogen ions are translocated across the cytoplasmic membrane), and thus conserves the redox energy in a proton gradient. This is NADH-quinone oxidoreductase subunit C from Bordetella parapertussis (strain 12822 / ATCC BAA-587 / NCTC 13253).